A 289-amino-acid polypeptide reads, in one-letter code: MLSSPVASTPFSVADILRLECQQKDSKTLSQWELHRNPVKPRYLRMNQESGWFESSDRAQAVPFRCTWETVLEMGSNPVGEPQTPPGTISRLGARNPMTDRGVGNLSGDMRRGGPVSTRTRPQRKSRVLFSQAQVLALERRFKQQRYLTAPEREHLASALQLTSTQVKIWFQNRRYKSKSQRQDQTLELAGHPLAPRRVAVPVLVLDGKPCLDPDVAAFLGPYKATSPYSCFGGYAGTPYDASYASRCTSASAGPGPLTPLASSGFSPGGQSAAPQGHLPATPQGVTAW.

2 disordered regions span residues 75–125 (GSNP…PQRK) and 259–289 (TPLASSGFSPGGQSAAPQGHLPATPQGVTAW). A DNA-binding region (homeobox) is located at residues 123–182 (QRKSRVLFSQAQVLALERRFKQQRYLTAPEREHLASALQLTSTQVKIWFQNRRYKSKSQR). The segment covering 261–274 (LASSGFSPGGQSAA) has biased composition (polar residues).

The protein belongs to the NK-2 homeobox family. In terms of tissue distribution, not detected in any neonate or adult tissues.

The protein localises to the nucleus. In terms of biological role, acts as a transcriptional activator. In conjunction with NKX2-5, may play a role in both pharyngeal and cardiac embryonic development. This Mus musculus (Mouse) protein is Homeobox protein Nkx-2.6 (Nkx2-6).